The chain runs to 599 residues: Aspartate--tRNA ligase (599 aa).

An L-aspartate-binding site is contributed by Glu-180. Residues 204-207 form an aspartate region; that stretch reads QIFK. An L-aspartate-binding site is contributed by Arg-226. Residues 226–228 and Gln-235 each bind ATP; that span reads RDE. His-454 provides a ligand contact to L-aspartate. Residue Glu-488 coordinates ATP. Arg-495 lines the L-aspartate pocket. 540 to 543 is a binding site for ATP; it reads GLDR.

Belongs to the class-II aminoacyl-tRNA synthetase family. Type 1 subfamily. As to quaternary structure, homodimer.

It localises to the cytoplasm. It carries out the reaction tRNA(Asp) + L-aspartate + ATP = L-aspartyl-tRNA(Asp) + AMP + diphosphate. Functionally, catalyzes the attachment of L-aspartate to tRNA(Asp) in a two-step reaction: L-aspartate is first activated by ATP to form Asp-AMP and then transferred to the acceptor end of tRNA(Asp). The polypeptide is Aspartate--tRNA ligase (Clostridium beijerinckii (strain ATCC 51743 / NCIMB 8052) (Clostridium acetobutylicum)).